The sequence spans 462 residues: Serine--tRNA ligase, cytoplasmic (462 aa).

Lys241 is covalently cross-linked (Glycyl lysine isopeptide (Lys-Gly) (interchain with G-Cter in URM1)). Residue 246-248 (TSE) coordinates L-serine. ATP is bound by residues 279 to 281 (RRE) and Val295. Glu302 is an L-serine binding site. Glycyl lysine isopeptide (Lys-Gly) (interchain with G-Cter in URM1) cross-links involve residues Lys350 and Lys351. An ATP-binding site is contributed by 366-369 (ELVS). Cys373 and Cys400 each carry cysteine persulfide. Thr404 lines the L-serine pocket.

It belongs to the class-II aminoacyl-tRNA synthetase family. Type-1 seryl-tRNA synthetase subfamily. As to quaternary structure, homodimer; the tRNA molecule probably binds across the dimer. Interacts with ABP140; interaction is required for the tRNA N(3)-methylcytidine methyltransferase activity of ABP140. In terms of processing, conjugated to URM1, a ubiquitin-like protein, in response to oxidative stresses. The attachment of URM1 to lysine residues exclusively depends on the presence of a peroxidatic cysteine in the target protein, with low specificity for the particular residue, motif, or structural context at which urmylation can occur. The URM1-conjugation reaction is mechanistically and directly coupled to the process of cysteine persulfidation, transfering the sulfur atom of the URM1 thiocarboxyl group to redox-active cysteine residues in the target protein if it is exposed to oxidative conditions. Post-translationally, persulfidated on specific redox-active cysteine residues. Persulfidation (also called protein S-sulfhydration) may provide a molecular mechanism that enables cells to protect vulnerable cysteine residues from reactive oxygen species (ROS) under stress conditions.

It is found in the cytoplasm. Its subcellular location is the cytosol. The catalysed reaction is tRNA(Ser) + L-serine + ATP = L-seryl-tRNA(Ser) + AMP + diphosphate + H(+). Functionally, catalyzes the attachment of serine to tRNA(Ser) in a two-step reaction: serine is first activated by ATP to form Ser-AMP and then transferred to the acceptor end of tRNA(Ser). The polypeptide is Serine--tRNA ligase, cytoplasmic (SES1) (Saccharomyces cerevisiae (strain ATCC 204508 / S288c) (Baker's yeast)).